The chain runs to 408 residues: Argininosuccinate synthase (408 aa).

ATP is bound by residues 11–19 (AYSGGLDTS) and A38. Residues Y91 and S96 each coordinate L-citrulline. Position 121 (G121) interacts with ATP. Residues T123, N127, and D128 each contribute to the L-aspartate site. An L-citrulline-binding site is contributed by N127. Positions 131, 182, 191, 267, and 279 each coordinate L-citrulline.

It belongs to the argininosuccinate synthase family. Type 1 subfamily. In terms of assembly, homotetramer.

Its subcellular location is the cytoplasm. It carries out the reaction L-citrulline + L-aspartate + ATP = 2-(N(omega)-L-arginino)succinate + AMP + diphosphate + H(+). It participates in amino-acid biosynthesis; L-arginine biosynthesis; L-arginine from L-ornithine and carbamoyl phosphate: step 2/3. In Zymomonas mobilis subsp. mobilis (strain ATCC 31821 / ZM4 / CP4), this protein is Argininosuccinate synthase.